We begin with the raw amino-acid sequence, 706 residues long: Polyribonucleotide nucleotidyltransferase (706 aa).

Aspartate 488 and aspartate 494 together coordinate Mg(2+). The region spanning proline 555–isoleucine 614 is the KH domain. An S1 motif domain is found at glycine 624–lysine 692.

Belongs to the polyribonucleotide nucleotidyltransferase family. Requires Mg(2+) as cofactor.

The protein localises to the cytoplasm. It catalyses the reaction RNA(n+1) + phosphate = RNA(n) + a ribonucleoside 5'-diphosphate. In terms of biological role, involved in mRNA degradation. Catalyzes the phosphorolysis of single-stranded polyribonucleotides processively in the 3'- to 5'-direction. The polypeptide is Polyribonucleotide nucleotidyltransferase (Albidiferax ferrireducens (strain ATCC BAA-621 / DSM 15236 / T118) (Rhodoferax ferrireducens)).